Consider the following 406-residue polypeptide: MALIIQKFGGTSVTTIDRIKKIIPIIKAEIAKNNQVIIVVSAMAGVTNQLVTLCNEVSSLNKSSQLAEYDVALSSGEIVTASLLALALQEENINARSFLAWQLPILTDDNHSKALVESVDTNLLNECLQQNIIPIIAGFQGINKHNRLATLGRGGSDTTAALIAAAMKADRCDIYTDVEGVFAADPRIIPKAKKIDEIDFSEMLELALSGAKVLHSRAAEIVMRYQIDMRILSTFAPEAGCTLITSKDKIMEKRIISGITSNKNLLYITIESSSLNFIQVASIIAQNNNHIEVMQEIEPNKRYSFITNLTDKNSLHILLTNLKNNNQISNFTFDTEIATVSIIGHGIKNDLKLLEVILSKLAKDNINVQMVQISEIKIILLINDKQVEKTVLDLYDLLKISETGHC.

The region spanning 342 to 406 is the ACT domain; that stretch reads IIGHGIKNDL…LLKISETGHC (65 aa).

The protein belongs to the aspartokinase family.

The catalysed reaction is L-aspartate + ATP = 4-phospho-L-aspartate + ADP. The protein operates within amino-acid biosynthesis; L-lysine biosynthesis via DAP pathway; (S)-tetrahydrodipicolinate from L-aspartate: step 1/4. It participates in amino-acid biosynthesis; L-methionine biosynthesis via de novo pathway; L-homoserine from L-aspartate: step 1/3. It functions in the pathway amino-acid biosynthesis; L-threonine biosynthesis; L-threonine from L-aspartate: step 1/5. The sequence is that of Aspartokinase (lysC) from Rickettsia bellii (strain RML369-C).